Reading from the N-terminus, the 307-residue chain is DDRGK domain-containing protein 1 (307 aa).

Residues 1-2 (MD) are Lumenal-facing. Residues 3–23 (LILLVGIAVALLVILATLYFL) traverse the membrane as a helical segment. Over 24–307 (QNKNKAAGEA…PVQSAAGGDS (284 aa)) the chain is Cytoplasmic. 2 stretches are compositionally biased toward low complexity: residues 32–43 (EAKPAAAAPRRG) and 54–83 (RRAQIARNQRNRLQQNAPAPAPEAVAPAAA). The interval 32–162 (EAKPAAAAPR…EEVEAEAERK (131 aa)) is disordered. A compositionally biased stretch (basic and acidic residues) spans 117 to 162 (KMEAKEQKRLQREHELQEREKRKVKEAKEDAERKQQEEVEAEAERK).

It belongs to the DDRGK1 family. As to quaternary structure, interacts with Atg9; the interaction is transient.

It localises to the endoplasmic reticulum membrane. Substrate adapter for ufmylation, the covalent attachment of the ubiquitin-like modifier UFM1 to substrate proteins. Required for ufmylation of Atg9; protects the nervous system during aging, possibly by stabilizing Atg9 and supporting its function. This is DDRGK domain-containing protein 1 from Drosophila willistoni (Fruit fly).